Reading from the N-terminus, the 628-residue chain is Vacuolar-sorting receptor 3 (628 aa).

The N-terminal stretch at 1–24 (MKQLLCYLPWLLLLTLLVSPLNDA) is a signal peptide. Residues 25-569 (RFVVEKNSLS…SKTGAQVRSA (545 aa)) lie on the Lumenal side of the membrane. Positions 56–168 (QYGGSMAGTV…GFGEKLKKAI (113 aa)) constitute a PA domain. Asn-148, Asn-294, and Asn-434 each carry an N-linked (GlcNAc...) asparagine glycan. 2 consecutive EGF-like domains span residues 416–466 (ESNE…SHCE) and 469–516 (GPGR…KKCE). Cystine bridges form between Cys-420–Cys-438, Cys-427–Cys-447, Cys-449–Cys-465, Cys-473–Cys-493, Cys-480–Cys-501, Cys-503–Cys-515, and Cys-545–Cys-558. In terms of domain architecture, EGF-like 3; calcium-binding spans 517 to 559 (DINECKEKKACQCPECSCKNTWGSYECSCSGDLLYIRDHDTCI). The helical transmembrane segment at 570–590 (WAAVWLIMLSLGLAAAGAYLV) threads the bilayer. The Cytoplasmic segment spans residues 591 to 628 (YKYRLRQYMDSEIRAIMAQYMPLDSQPEIPNHVNDERA). The short motif at 610-613 (YMPL) is the Tyrosine-based internalization motif element.

It belongs to the VSR (BP-80) family. In terms of tissue distribution, expressed in seeds, seedlings, roots, leaves, flowers and siliques.

The protein localises to the membrane. It is found in the golgi apparatus membrane. The protein resides in the cytoplasmic vesicle. Its subcellular location is the clathrin-coated vesicle membrane. It localises to the prevacuolar compartment membrane. Functionally, vacuolar-sorting receptor (VSR) involved in clathrin-coated vesicles sorting from Golgi apparatus to vacuoles. The protein is Vacuolar-sorting receptor 3 (VSR3) of Arabidopsis thaliana (Mouse-ear cress).